We begin with the raw amino-acid sequence, 427 residues long: L-rhamnose isomerase (427 aa).

His264, Asp296, and Asp298 together coordinate Mn(2+).

Belongs to the rhamnose isomerase family. Mn(2+) is required as a cofactor.

It is found in the cytoplasm. The enzyme catalyses L-rhamnopyranose = L-rhamnulose. The protein operates within carbohydrate degradation; L-rhamnose degradation; glycerone phosphate from L-rhamnose: step 1/3. Catalyzes the interconversion of L-rhamnose and L-rhamnulose. The polypeptide is L-rhamnose isomerase (Lactiplantibacillus plantarum (strain ATCC BAA-793 / NCIMB 8826 / WCFS1) (Lactobacillus plantarum)).